The sequence spans 189 residues: MTLVQVMAQDDRDQVVLRTADRTEIADTLRPFGIQLDRWPLRELPADAGQDAVLAAYRAEVDEVCRAGGYRFVDVVRLVPAPEDPEWPARAAAARGRFLDEHRHTEHEVRFFVEGRGCFYLHLGDKVYALVCEAGDLVSVPAGTTHWFDMGAQPHFCAIRFFEREDGWIGDFTGSPIASTMPTLDELVG.

His102, His104, Glu108, and His146 together coordinate Fe(2+). Positions 102, 104, 108, and 146 each coordinate Ni(2+).

This sequence belongs to the acireductone dioxygenase (ARD) family. Monomer. Fe(2+) serves as cofactor. The cofactor is Ni(2+).

It catalyses the reaction 1,2-dihydroxy-5-(methylsulfanyl)pent-1-en-3-one + O2 = 3-(methylsulfanyl)propanoate + CO + formate + 2 H(+). The catalysed reaction is 1,2-dihydroxy-5-(methylsulfanyl)pent-1-en-3-one + O2 = 4-methylsulfanyl-2-oxobutanoate + formate + 2 H(+). It participates in amino-acid biosynthesis; L-methionine biosynthesis via salvage pathway; L-methionine from S-methyl-5-thio-alpha-D-ribose 1-phosphate: step 5/6. Its function is as follows. Catalyzes 2 different reactions between oxygen and the acireductone 1,2-dihydroxy-3-keto-5-methylthiopentene (DHK-MTPene) depending upon the metal bound in the active site. Fe-containing acireductone dioxygenase (Fe-ARD) produces formate and 2-keto-4-methylthiobutyrate (KMTB), the alpha-ketoacid precursor of methionine in the methionine recycle pathway. Ni-containing acireductone dioxygenase (Ni-ARD) produces methylthiopropionate, carbon monoxide and formate, and does not lie on the methionine recycle pathway. This chain is Acireductone dioxygenase 1, found in Nocardia farcinica (strain IFM 10152).